Here is a 319-residue protein sequence, read N- to C-terminus: uncharacterized protein (319 aa).

Residues 268–312 show a composition bias toward low complexity; it reads SSVVAVTHPPSTTSTTTSVSETLSSFIAPSDLSSQPSPSSHPSSP. The segment at 268-319 is disordered; it reads SSVVAVTHPPSTTSTTTSVSETLSSFIAPSDLSSQPSPSSHPSSPFGNHNEF.

This is an uncharacterized protein from Lepidoptera (butterflies and moths).